The following is a 208-amino-acid chain: MTQNPGKFIVIEGLEGAGKSSAITLVHDFIEKHTGMAPVCTREPGGTPLAEKIRDLVKNAEPGDPLCDEAECLLFYAARAQLVANVIKPSLASGRWVLGDRHNLSSIAYQGGGRGLMSLVKTISDATLGGFKPDLTLYLDIDPLLGLERAARRGALDRIEQQEIDFFHRARATFLAQARDDSSIVVIDASKPLNEVHKDILACLSTAL.

13–20 (GLEGAGKS) is an ATP binding site.

It belongs to the thymidylate kinase family.

The catalysed reaction is dTMP + ATP = dTDP + ADP. Phosphorylation of dTMP to form dTDP in both de novo and salvage pathways of dTTP synthesis. This Shewanella amazonensis (strain ATCC BAA-1098 / SB2B) protein is Thymidylate kinase.